A 57-amino-acid polypeptide reads, in one-letter code: uncharacterized protein (57 aa).

2 helical membrane passes run 2–22 (LLVV…LRSV) and 29–49 (GFLL…MTVI).

It localises to the cell membrane. This is an uncharacterized protein from Bacillus subtilis (strain 168).